The primary structure comprises 200 residues: uncharacterized protein (200 aa).

This is an uncharacterized protein from Bacillus subtilis (strain 168).